Consider the following 554-residue polypeptide: Solute carrier family 22 member 1 (554 aa).

Over 1-21 (MPTVDDVLEQVGEFGWFQKRT) the chain is Cytoplasmic. Residues 22 to 42 (FLFLCLISAILAPIYLGIVFL) traverse the membrane as a helical segment. Residues 43–149 (GFTPDHRCRS…LVCADAWKVD (107 aa)) lie on the Extracellular side of the membrane. The N-linked (GlcNAc...) asparagine glycan is linked to asparagine 71. A helical membrane pass occupies residues 150-170 (LFQSCVNLGFFLGSLGVGYIA). Over 171 to 176 (DRFGRK) the chain is Cytoplasmic. The chain crosses the membrane as a helical span at residues 177 to 197 (LCLLLTTLINAVSGVLTAVAP). The Extracellular segment spans residues 198–206 (DYTSMLLFR). Residues 207–229 (LLQGLVSKGSWMSGYTLITEFVG) traverse the membrane as a helical segment. The Cytoplasmic portion of the chain corresponds to 230 to 237 (SGYRRTVA). The helical transmembrane segment at 238 to 258 (ILYQVAFSVGLVALSGVAYAI) threads the bilayer. The Extracellular portion of the chain corresponds to 259–262 (PNWR). The chain crosses the membrane as a helical span at residues 263 to 283 (WLQLTVSLPTFLCLFYYWCVP). The short motif at 283–287 (PESPR) is the Proline-rich sequence element. Residues 284-347 (ESPRWLLSQK…FRTPNLRKHT (64 aa)) lie on the Cytoplasmic side of the membrane. At serine 333 the chain carries Phosphoserine. The chain crosses the membrane as a helical span at residues 348–368 (FILMFLWFTCSVLYQGLILHM). Residues 369–374 (GATGGN) are Extracellular-facing. A helical membrane pass occupies residues 375–395 (VYLDFFYSSLVEFPAAFVILV). Over 396-402 (TIDRVGR) the chain is Cytoplasmic. A helical transmembrane segment spans residues 403–423 (IYPMAASNLAAGVASVILIFV). Topologically, residues 424–431 (PQDLHWLT) are extracellular. A helical transmembrane segment spans residues 432 to 452 (IVLSCVGRMGATIVLQMICLV). The Cytoplasmic segment spans residues 453–464 (NAELYPTFVRNL). A helical transmembrane segment spans residues 465–485 (GVMVCSALCDVGGIITPFMVF). At 486–492 (RLMEVWQ) the chain is on the extracellular side. Residues 493-513 (PLPLIVFGVLGLLAGGMTLLL) form a helical membrane-spanning segment. At 514 to 554 (PETKGVALPETIEDAENLRRKAKPKESKIYLQVQTSELKGP) the chain is on the cytoplasmic side.

Belongs to the major facilitator (TC 2.A.1) superfamily. Organic cation transporter (TC 2.A.1.19) family. Phosphorylated. Expressed in kidney, liver and intestine.

It is found in the basolateral cell membrane. Its subcellular location is the apical cell membrane. It localises to the lateral cell membrane. The protein resides in the basal cell membrane. The enzyme catalyses 1-methylnicotinamide(out) = 1-methylnicotinamide(in). The catalysed reaction is dopamine(out) = dopamine(in). It catalyses the reaction serotonin(out) = serotonin(in). It carries out the reaction (R)-adrenaline(out) = (R)-adrenaline(in). The enzyme catalyses (R)-noradrenaline(out) = (R)-noradrenaline(in). The catalysed reaction is histamine(out) = histamine(in). It catalyses the reaction guanidine(out) = guanidine(in). It carries out the reaction choline(out) = choline(in). The enzyme catalyses acetylcholine(in) = acetylcholine(out). The catalysed reaction is thiamine(in) = thiamine(out). It catalyses the reaction spermidine(in) = spermidine(out). It carries out the reaction agmatine(out) = agmatine(in). The enzyme catalyses putrescine(out) = putrescine(in). The catalysed reaction is (R)-carnitine(in) = (R)-carnitine(out). It catalyses the reaction O-isobutanoyl-(R)-carnitine(in) = O-isobutanoyl-(R)-carnitine(out). It carries out the reaction O-acetyl-(R)-carnitine(in) = O-acetyl-(R)-carnitine(out). The enzyme catalyses O-3-hydroxybutanoyl-(R)-carnitine(in) = O-3-hydroxybutanoyl-(R)-carnitine(out). The catalysed reaction is O-propanoyl-(R)-carnitine(in) = O-propanoyl-(R)-carnitine(out). It catalyses the reaction O-butanoyl-(R)-carnitine(in) = O-butanoyl-(R)-carnitine(out). It carries out the reaction O-2-methylbutanoyl-(R)-carnitine(in) = O-2-methylbutanoyl-(R)-carnitine(out). The enzyme catalyses O-3-methylbutanoyl-(R)-carnitine(in) = O-3-methylbutanoyl-(R)-carnitine(out). The catalysed reaction is O-hexanoyl-(R)-carnitine(in) = O-hexanoyl-(R)-carnitine(out). It catalyses the reaction L-histidyl-L-proline diketopiperazine(in) = L-histidyl-L-proline diketopiperazine(out). It carries out the reaction (R)-salsolinol(in) = (R)-salsolinol(out). The enzyme catalyses prostaglandin F2alpha(out) = prostaglandin F2alpha(in). The catalysed reaction is prostaglandin E2(out) = prostaglandin E2(in). Its activity is regulated as follows. Phosphorylation of the transporter leads to changes in its substrate affinity, resulting in a regulation of the transport activity. In contrast with rat ortholog, ASP uptake is inhibited by protein kinase A (PKA) and C (PKC) activation. ASP uptake is also endogenously activated by calmodulin, the calmodulin-dependent kinase II and LCK tyrosine kinase. Inhibited by cGMP, most likely through a cGMP-binding protein that interacts with OCT1. Functionally, electrogenic voltage-dependent transporter that mediates the transport of a variety of organic cations such as endogenous bioactive amines, cationic drugs and xenobiotics. Functions as a pH- and Na(+)-independent, bidirectional transporter. Cation cellular uptake or release is driven by the electrochemical potential (i.e. membrane potential and concentration gradient) and substrate selectivity. Hydrophobicity is a major requirement for recognition in polyvalent substrates and inhibitors. Primarily expressed in the basolateral membrane of hepatocytes and proximal tubules and involved in the uptake and disposition of cationic compounds from the blood by hepatic and renal clearance. Most likely functions as an uptake carrier in enterocytes contributing to the intestinal elimination of organic cations from the systemic circulation. Transports endogenous monoamines such as N-1-methylnicotinamide (NMN), guanidine, neurotransmitters dopamine, serotonin, noradrenaline, adrenaline and histamine, and quaternary ammonium compound such as choline. Also transports natural polyamines such as spermidine, agmatine and putrescine at low affinity, but relatively high turnover. Involved in the hepatic and intestinal uptake of the vitamin B1/thiamine, hence regulating hepatic lipid and energy metabolism. Contributes to the influx and efflux of fatty acid carriers carnitines and acylcarnitines across the basolateral membrane of hepatocytes, from the liver to the systemic circulation and inversely and may be involved in regulating the systemic availability of hepatic acylcarnitines. Also capable of transporting non-amine endogenous compounds such as prostaglandin E2 (PGE2) and prostaglandin F2-alpha (PGF2-alpha). May contribute to the transport of cationic compounds in testes across the blood-testis-barrier. Also mediates the uptake of xenobiotics tributylmethylammonium (TBuMA), quinidine, N-methyl-quinine (NMQ), N-methyl-quinidine (NMQD) N-(4,4-azo-n-pentyl)-quinuclidine (APQ), azidoprocainamide methoiodide (AMP), N-(4,4-azo-n-pentyl)-21-deoxyajmalinium (APDA) and 4-(4-(dimethylamino)styryl)-N-methylpyridinium (ASP). This is Solute carrier family 22 member 1 (SLC22A1) from Oryctolagus cuniculus (Rabbit).